The chain runs to 198 residues: Integrator complex subunit 8-like protein (198 aa).

The protein belongs to the Integrator subunit 8 family. Component of the Integrator complex. The core complex associates with protein phosphatase 2A subunits, to form the Integrator-PP2A (INTAC) complex.

The protein localises to the nucleus. Its subcellular location is the chromosome. In terms of biological role, component of the integrator complex, a multiprotein complex that terminates RNA polymerase II (Pol II) transcription in the promoter-proximal region of genes. The integrator complex provides a quality checkpoint during transcription elongation by driving premature transcription termination of transcripts that are unfavorably configured for transcriptional elongation: the complex terminates transcription by (1) catalyzing dephosphorylation of the C-terminal domain (CTD) of Pol II subunit polr2a, (2) degrading the exiting nascent RNA transcript via endonuclease activity and (3) promoting the release of Pol II from bound DNA. The integrator complex is also involved in terminating the synthesis of non-coding Pol II transcripts, such as enhancer RNAs (eRNAs), small nuclear RNAs (snRNAs), telomerase RNAs and long non-coding RNAs (lncRNAs). Within the integrator complex, INTS8 is required for the recruitment of protein phosphatase 2A (PP2A) to transcription pause-release checkpoint. This Dictyostelium discoideum (Social amoeba) protein is Integrator complex subunit 8-like protein.